A 472-amino-acid chain; its full sequence is Selenium-binding protein 2 (472 aa).

Ser467 carries the post-translational modification Phosphoserine.

It belongs to the selenium-binding protein family. Post-translationally, the N-terminus is blocked. As to expression, mainly expressed in liver.

It localises to the nucleus. Its subcellular location is the cytoplasm. The protein resides in the cytosol. It is found in the membrane. Selenium- and acetaminophen-binding protein which may be involved in the sensing of reactive xenobiotics in the cytoplasm. May be involved in intra-Golgi protein transport. The polypeptide is Selenium-binding protein 2 (Selenbp2) (Mus musculus (Mouse)).